We begin with the raw amino-acid sequence, 388 residues long: Succinate--CoA ligase [ADP-forming] subunit beta (388 aa).

The ATP-grasp domain occupies 9–244; that stretch reads KQLFARYGLP…QSQEDPREAQ (236 aa). ATP contacts are provided by residues K46, 53–55, E99, T102, and E107; that span reads GRG. Mg(2+) contacts are provided by N199 and D213. Substrate contacts are provided by residues N264 and 321 to 323; that span reads GIV.

The protein belongs to the succinate/malate CoA ligase beta subunit family. In terms of assembly, heterotetramer of two alpha and two beta subunits. Requires Mg(2+) as cofactor.

The enzyme catalyses succinate + ATP + CoA = succinyl-CoA + ADP + phosphate. The catalysed reaction is GTP + succinate + CoA = succinyl-CoA + GDP + phosphate. Its pathway is carbohydrate metabolism; tricarboxylic acid cycle; succinate from succinyl-CoA (ligase route): step 1/1. In terms of biological role, succinyl-CoA synthetase functions in the citric acid cycle (TCA), coupling the hydrolysis of succinyl-CoA to the synthesis of either ATP or GTP and thus represents the only step of substrate-level phosphorylation in the TCA. The beta subunit provides nucleotide specificity of the enzyme and binds the substrate succinate, while the binding sites for coenzyme A and phosphate are found in the alpha subunit. The protein is Succinate--CoA ligase [ADP-forming] subunit beta of Enterobacter sp. (strain 638).